Here is a 162-residue protein sequence, read N- to C-terminus: Ribosomal RNA large subunit methyltransferase H (162 aa).

S-adenosyl-L-methionine is bound by residues Leu78, Gly109, and 128-133; that span reads LSALTL.

The protein belongs to the RNA methyltransferase RlmH family. As to quaternary structure, homodimer.

Its subcellular location is the cytoplasm. It catalyses the reaction pseudouridine(1915) in 23S rRNA + S-adenosyl-L-methionine = N(3)-methylpseudouridine(1915) in 23S rRNA + S-adenosyl-L-homocysteine + H(+). Its function is as follows. Specifically methylates the pseudouridine at position 1915 (m3Psi1915) in 23S rRNA. This is Ribosomal RNA large subunit methyltransferase H from Psychrobacter cryohalolentis (strain ATCC BAA-1226 / DSM 17306 / VKM B-2378 / K5).